The chain runs to 291 residues: Small ribosomal subunit biogenesis GTPase RsgA (291 aa).

In terms of domain architecture, CP-type G spans 63–221; sequence KNELKRPPVS…IADTPGFSAL (159 aa). GTP contacts are provided by residues 112 to 115 and 164 to 172; these read TKKD and GQSGVGKST. Residues Cys-245, Cys-250, His-252, and Cys-258 each coordinate Zn(2+).

The protein belongs to the TRAFAC class YlqF/YawG GTPase family. RsgA subfamily. Monomer. Associates with 30S ribosomal subunit, binds 16S rRNA. Zn(2+) is required as a cofactor.

The protein localises to the cytoplasm. In terms of biological role, one of several proteins that assist in the late maturation steps of the functional core of the 30S ribosomal subunit. Helps release RbfA from mature subunits. May play a role in the assembly of ribosomal proteins into the subunit. Circularly permuted GTPase that catalyzes slow GTP hydrolysis, GTPase activity is stimulated by the 30S ribosomal subunit. The protein is Small ribosomal subunit biogenesis GTPase RsgA of Staphylococcus aureus (strain MRSA252).